Consider the following 361-residue polypeptide: Heme A synthase (361 aa).

The next 8 membrane-spanning stretches (helical) occupy residues 22-42, 109-129, 139-159, 175-195, 208-228, 269-289, 303-323, and 324-344; these read LWVR…VLVG, LLAR…WVTG, LLGI…MVAS, HLTI…GLAP, FAFW…LVAG, FVHR…AIAT, VLLF…LLMV, and VPMD…GFAT. Residue His271 participates in heme binding. His332 provides a ligand contact to heme.

This sequence belongs to the COX15/CtaA family. Type 2 subfamily. In terms of assembly, interacts with CtaB. Requires heme b as cofactor.

It is found in the cell membrane. It carries out the reaction Fe(II)-heme o + 2 A + H2O = Fe(II)-heme a + 2 AH2. It participates in porphyrin-containing compound metabolism; heme A biosynthesis; heme A from heme O: step 1/1. Catalyzes the conversion of heme O to heme A by two successive hydroxylations of the methyl group at C8. The first hydroxylation forms heme I, the second hydroxylation results in an unstable dihydroxymethyl group, which spontaneously dehydrates, resulting in the formyl group of heme A. This is Heme A synthase from Chelativorans sp. (strain BNC1).